The primary structure comprises 342 residues: Sorting nexin-15 (342 aa).

The 130-residue stretch at 1-130 (MSRQAKDDFL…EFFRGGEVTR (130 aa)) folds into the PX domain. Residues R51, S53, R87, and R96 each contribute to the a 1,2-diacyl-sn-glycero-3-phospho-(1D-myo-inositol-3-phosphate) site. R105 carries the post-translational modification Omega-N-methylarginine. Residues S201 and S227 each carry the phosphoserine modification. A disordered region spans residues 245-267 (DQEPWEPGGQEEEEDGEGGPTPA). Residues 265 to 342 (TPAYLSQATE…LRLHLSQLPP (78 aa)) form the MIT domain.

This sequence belongs to the sorting nexin family. In terms of assembly, homodimer. Interacts with SNX1, SNX2 and SNX4. In terms of tissue distribution, widely expressed.

The protein localises to the cytoplasm. Its subcellular location is the membrane. The protein resides in the cytoplasmic vesicle membrane. Functionally, may be involved in several stages of intracellular trafficking. Overexpression of SNX15 disrupts the normal trafficking of proteins from the plasma membrane to recycling endosomes or the TGN. This chain is Sorting nexin-15 (SNX15), found in Homo sapiens (Human).